The primary structure comprises 86 residues: Weak neurotoxin 10 (86 aa).

The first 21 residues, 1–21, serve as a signal peptide directing secretion; the sequence is MKTLLLTLVVVTIVCLDLGYT. Cystine bridges form between Cys-24–Cys-45, Cys-27–Cys-32, Cys-38–Cys-63, Cys-67–Cys-78, and Cys-79–Cys-84.

Belongs to the three-finger toxin family. Ancestral subfamily. Orphan group II sub-subfamily. In terms of tissue distribution, expressed by the venom gland.

Its subcellular location is the secreted. Functionally, binds with low affinity to muscular (alpha-1-beta-1-delta-epsilon/CHRNA1-CHRNB1-CHRND-CHRNE) and very low affinity to neuronal (alpha-7/CHRNA7) nicotinic acetylcholine receptor (nAChR). The protein is Weak neurotoxin 10 (WNTX10) of Naja sputatrix (Malayan spitting cobra).